A 509-amino-acid chain; its full sequence is BPI fold-containing family C protein (509 aa).

The signal sequence occupies residues 1 to 23 (MRTKQVPVLWACFLLWSLYIASS). N-linked (GlcNAc...) asparagine glycosylation is found at Asn-63, Asn-79, Asn-92, Asn-113, and Asn-117. The cysteines at positions 161 and 202 are disulfide-linked. N-linked (GlcNAc...) asparagine glycosylation is found at Asn-215, Asn-227, Asn-357, Asn-374, and Asn-457.

It belongs to the BPI/LBP/Plunc superfamily. BPI/LBP family.

Its subcellular location is the secreted. In Mus musculus (Mouse), this protein is BPI fold-containing family C protein (Bpifc).